A 491-amino-acid chain; its full sequence is Glycogen synthase 1 (491 aa).

Lysine 15 contributes to the ADP-alpha-D-glucose binding site.

This sequence belongs to the glycosyltransferase 1 family. Bacterial/plant glycogen synthase subfamily.

The catalysed reaction is [(1-&gt;4)-alpha-D-glucosyl](n) + ADP-alpha-D-glucose = [(1-&gt;4)-alpha-D-glucosyl](n+1) + ADP + H(+). Its pathway is glycan biosynthesis; glycogen biosynthesis. Its function is as follows. Synthesizes alpha-1,4-glucan chains using ADP-glucose. In Synechococcus sp. (strain JA-2-3B'a(2-13)) (Cyanobacteria bacterium Yellowstone B-Prime), this protein is Glycogen synthase 1.